The chain runs to 131 residues: Profilin-1 (131 aa).

The protein belongs to the profilin family. In terms of assembly, occurs in many kinds of cells as a complex with monomeric actin in a 1:1 ratio. In terms of tissue distribution, expressed at low levels roots, leaves, stems, flowers and siliques. Expressed in leaf epidermal cells, trichomes and stem epidermal cells. Detected in phloem exudates (at protein level).

It localises to the cytoplasm. The protein resides in the cytoskeleton. Its function is as follows. Binds to actin monomers and regulates the organization of the actin cytoskeleton. At high concentrations, profilin prevents the polymerization of actin, whereas it enhances it at low concentrations. At low concentrations, associates with the poly-proline motif of formins to enhance actin filament elongation rate. Binds ACT1, ACT7 and ACT11 and inhibits actin polymerization. Coordinates the stochastic dynamic properties of actin filaments by modulating formin-mediated actin nucleation and assembly during axial cell expansion. Binds G-actin and poly-L-proline in vitro. Inhibits cell growth of various pathogenic fungal strains. May play a role as antifungal proteins in the defense system against fungal pathogen attacks. In Arabidopsis thaliana (Mouse-ear cress), this protein is Profilin-1.